Consider the following 156-residue polypeptide: Small ribosomal subunit protein uS7 (156 aa).

Belongs to the universal ribosomal protein uS7 family. In terms of assembly, part of the 30S ribosomal subunit. Contacts proteins S9 and S11.

In terms of biological role, one of the primary rRNA binding proteins, it binds directly to 16S rRNA where it nucleates assembly of the head domain of the 30S subunit. Is located at the subunit interface close to the decoding center, probably blocks exit of the E-site tRNA. The protein is Small ribosomal subunit protein uS7 of Erythrobacter litoralis (strain HTCC2594).